We begin with the raw amino-acid sequence, 701 residues long: DUF724 domain-containing protein 6 (701 aa).

Disordered regions lie at residues 299–353 (MKTK…KRAN) and 374–452 (VEPV…DESC). Over residues 326-340 (LNLEKSAETLTKAES) the composition is skewed to basic and acidic residues. Positions 381-399 (RVRTATPLKQTKADTQGKS) are enriched in polar residues. Composition is skewed to basic and acidic residues over residues 403 to 412 (KTLEPMRDEN), 421 to 430 (KVLEEKNSEK), and 437 to 449 (RQEE…KETD). In terms of domain architecture, DUF724 spans 514–700 (LPFAKKSPFW…LEFQSTASAP (187 aa)). Residues 626–670 (LEKKIEAGEIEGHTYEEEMAELELKILELKRQQVVAKEMKEATDK) adopt a coiled-coil conformation.

As to expression, expressed in roots, stems and flowers.

The protein resides in the nucleus. In terms of biological role, may be involved in the polar growth of plant cells via transportation of RNAs. The sequence is that of DUF724 domain-containing protein 6 from Arabidopsis thaliana (Mouse-ear cress).